The following is a 263-amino-acid chain: Proteasome subunit alpha (263 aa).

The segment at 229–263 (AALLQDTPPDDADADADAGKKPANDGNLPPNDDKS) is disordered.

It belongs to the peptidase T1A family. As to quaternary structure, the 20S proteasome core is composed of 14 alpha and 14 beta subunits that assemble into four stacked heptameric rings, resulting in a barrel-shaped structure. The two inner rings, each composed of seven catalytic beta subunits, are sandwiched by two outer rings, each composed of seven alpha subunits. The catalytic chamber with the active sites is on the inside of the barrel. Has a gated structure, the ends of the cylinder being occluded by the N-termini of the alpha-subunits. Is capped by the proteasome-associated ATPase, ARC.

It localises to the cytoplasm. Its pathway is protein degradation; proteasomal Pup-dependent pathway. With respect to regulation, the formation of the proteasomal ATPase ARC-20S proteasome complex, likely via the docking of the C-termini of ARC into the intersubunit pockets in the alpha-rings, may trigger opening of the gate for substrate entry. Interconversion between the open-gate and close-gate conformations leads to a dynamic regulation of the 20S proteasome proteolysis activity. In terms of biological role, component of the proteasome core, a large protease complex with broad specificity involved in protein degradation. This chain is Proteasome subunit alpha, found in Actinosynnema mirum (strain ATCC 29888 / DSM 43827 / JCM 3225 / NBRC 14064 / NCIMB 13271 / NRRL B-12336 / IMRU 3971 / 101).